Reading from the N-terminus, the 1231-residue chain is uncharacterized protein (1231 aa).

Disordered stretches follow at residues 171–197 (LKPD…QHDD), 210–259 (DESF…HLPT), and 389–547 (ASPR…RSSR). Over residues 440-450 (RSRHSHKRRSI) the composition is skewed to basic residues. Phosphoserine occurs at positions 449, 451, 453, and 455. The segment covering 458–502 (RGGRRAVRRSRSRSPRRSYNRGSTRSRSRSMRHRSRSPAHYRGRG) has biased composition (basic residues). The span at 503–541 (RGREPASKERGSSSRDFGGRHSLQRERERSSEYYHRNEG) shows a compositional bias: basic and acidic residues. Tyrosine 549 carries the post-translational modification Phosphotyrosine. Disordered stretches follow at residues 570–591 (KTSS…ASEP), 950–981 (PNLD…DDEE), and 1058–1203 (TLSK…PPFN). 2 positions are modified to phosphoserine: serine 573 and serine 589. Threonine 970 carries the phosphothreonine modification. Serine 972 bears the Phosphoserine mark. Residues 1076 to 1103 (YMMNQQHGAPNAQNAPNLGQNPGQNLGQ) are compositionally biased toward polar residues. The segment covering 1118–1127 (QQQQQQQQQQ) has biased composition (low complexity). Residues 1178-1203 (PPGPGGYVGPPPNPWASNVPPQPPFN) show a composition bias toward pro residues.

This is an uncharacterized protein from Drosophila melanogaster (Fruit fly).